The following is a 183-amino-acid chain: Adenine phosphoribosyltransferase (183 aa).

Belongs to the purine/pyrimidine phosphoribosyltransferase family. In terms of assembly, homodimer.

It localises to the cytoplasm. The enzyme catalyses AMP + diphosphate = 5-phospho-alpha-D-ribose 1-diphosphate + adenine. The protein operates within purine metabolism; AMP biosynthesis via salvage pathway; AMP from adenine: step 1/1. In terms of biological role, catalyzes a salvage reaction resulting in the formation of AMP, that is energically less costly than de novo synthesis. In Erwinia tasmaniensis (strain DSM 17950 / CFBP 7177 / CIP 109463 / NCPPB 4357 / Et1/99), this protein is Adenine phosphoribosyltransferase.